The following is a 360-amino-acid chain: DNA replication and repair protein RecF (360 aa).

Position 30 to 37 (Gly-30 to Thr-37) interacts with ATP.

It belongs to the RecF family.

It is found in the cytoplasm. The RecF protein is involved in DNA metabolism; it is required for DNA replication and normal SOS inducibility. RecF binds preferentially to single-stranded, linear DNA. It also seems to bind ATP. This chain is DNA replication and repair protein RecF, found in Acinetobacter baumannii (strain SDF).